The sequence spans 475 residues: Tubulin gamma chain (475 aa).

A142 to G148 provides a ligand contact to GTP. The segment at G455 to S475 is disordered.

The protein belongs to the tubulin family.

It is found in the cytoplasm. It localises to the cytoskeleton. The protein resides in the microtubule organizing center. Tubulin is the major constituent of microtubules. The gamma chain is found at microtubule organizing centers (MTOC) such as the spindle poles, suggesting that it is involved in the minus-end nucleation of microtubule assembly. The polypeptide is Tubulin gamma chain (TUBG1) (Physcomitrium patens (Spreading-leaved earth moss)).